Reading from the N-terminus, the 312-residue chain is Dipeptide transport ATP-binding protein DppF (312 aa).

The 246-residue stretch at 10 to 255 (IKNLDLTFNK…PIHPYTKSLL (246 aa)) folds into the ABC transporter domain. 45-52 (GESGSGKT) is a binding site for ATP.

Belongs to the ABC transporter superfamily. In terms of assembly, the complex is composed of two ATP-binding proteins (DppD and DppF), two transmembrane proteins (DppB and DppC) and a solute-binding protein (DppA).

It is found in the cell membrane. The enzyme catalyses a dipeptide(out) + ATP + H2O = a dipeptide(in) + ADP + phosphate + H(+). Its function is as follows. Part of the ABC transporter DppABCDF involved in dipeptide transport. Responsible for energy coupling to the transport system. The chain is Dipeptide transport ATP-binding protein DppF from Lactococcus lactis subsp. cremoris (strain MG1363).